The sequence spans 469 residues: Probable NADPH:adrenodoxin oxidoreductase, mitochondrial (469 aa).

Residues 1-38 constitute a mitochondrion transit peptide; the sequence is MLSRFIKRTYSTQTSSPVVGIIGSGPAAFYTAHRLLRN. Residues alanine 27, glutamate 48, leucine 56, and valine 92 each contribute to the FAD site. NADP(+) contacts are provided by residues 164 to 167, 208 to 209, and glutamate 220; these read HGNV and RR. FAD contacts are provided by residues tryptophan 375 and 382–384; that span reads GVI. Residue glycine 382 coordinates NADP(+).

This sequence belongs to the ferredoxin--NADP reductase type 1 family. It depends on FAD as a cofactor.

The protein localises to the mitochondrion inner membrane. The enzyme catalyses 2 reduced [adrenodoxin] + NADP(+) + H(+) = 2 oxidized [adrenodoxin] + NADPH. Adrenodoxin reductase transfers electrons from NADPH to adrenodoxin, which is involved in heme A biosynthesis and in iron-sulfur cluster assembly. Involved in the electron transfer to heme A synthase etp1(cd), a heme protein that catalyzes the conversion of heme O to heme A. Required for the de novo synthesis of Fe-S clusters on iron sulfur cluster assembly protein isu1. Involved in electron delivery for Fe-S cluster synthesis. Essential for coenzyme Q biosynthesis. May be involved in the electron transfer required for the hydroxylation reaction performed by coq6. May play a role in cellular and mitochondrial iron homeostasis. In Schizosaccharomyces pombe (strain 972 / ATCC 24843) (Fission yeast), this protein is Probable NADPH:adrenodoxin oxidoreductase, mitochondrial (arh1).